Here is a 476-residue protein sequence, read N- to C-terminus: ATP synthase subunit beta (476 aa).

154 to 161 (GGAGVGKT) lines the ATP pocket.

Belongs to the ATPase alpha/beta chains family. As to quaternary structure, F-type ATPases have 2 components, CF(1) - the catalytic core - and CF(0) - the membrane proton channel. CF(1) has five subunits: alpha(3), beta(3), gamma(1), delta(1), epsilon(1). CF(0) has three main subunits: a(1), b(2) and c(9-12). The alpha and beta chains form an alternating ring which encloses part of the gamma chain. CF(1) is attached to CF(0) by a central stalk formed by the gamma and epsilon chains, while a peripheral stalk is formed by the delta and b chains.

Its subcellular location is the cell inner membrane. It carries out the reaction ATP + H2O + 4 H(+)(in) = ADP + phosphate + 5 H(+)(out). Produces ATP from ADP in the presence of a proton gradient across the membrane. The catalytic sites are hosted primarily by the beta subunits. This chain is ATP synthase subunit beta, found in Afipia carboxidovorans (strain ATCC 49405 / DSM 1227 / KCTC 32145 / OM5) (Oligotropha carboxidovorans).